The primary structure comprises 255 residues: Small ribosomal subunit protein uS2 (255 aa).

A disordered region spans residues 231–255 (RLQTGAEEEFSTEGEEVVEETPAEA). Positions 236 to 255 (AEEEFSTEGEEVVEETPAEA) are enriched in acidic residues.

The protein belongs to the universal ribosomal protein uS2 family.

The chain is Small ribosomal subunit protein uS2 from Citrifermentans bemidjiense (strain ATCC BAA-1014 / DSM 16622 / JCM 12645 / Bem) (Geobacter bemidjiensis).